Reading from the N-terminus, the 481-residue chain is MSVTKSAGSPQVAATVKLDLVSFPESAKKVQSQDPNPVNGSSSESSEKTKGITGFQTLVHLVKGNMGTGILGLPLAVKNAGILMGPLSLLVMGLIACHCMHILVRCAQRFCHRLNKPFMDYGDTVMHGLASSPNTWLQSHAHWGRHAVSFFLIVTQLGFCCVYIVFLADNLKQVVEAVNSTTISCHKNETVVLTPTIDSRLYMLAFLPVLGLLVFIRNLRVLTIFSLLANVSMLVSLVIIGQYIIQGIPDPSQLPLVASWKTYPLFFGTAIFSFESIGVVLPLENKMKDARRFPTILSLGMSIITTLYIAIGALGYLRFGDDIKASITLNLPNCWLYQSVKLLYVVGILCTHALQFYVPAEIIIPLAVSQVSKRWALPVDLSIRLALVCVTCMLAILIPRLDLVLSLVGSVSSSALALIIPPLLEVTTYYGEGMSPLTITKDALISILGFMGFVVGTYQALDELIRSGNSLPLSNSTMFIQ.

Over 1 to 56 the chain is Cytoplasmic; the sequence is MSVTKSAGSPQVAATVKLDLVSFPESAKKVQSQDPNPVNGSSSESSEKTKGITGFQ. The disordered stretch occupies residues 26–49; sequence SAKKVQSQDPNPVNGSSSESSEKT. Positions 29–40 are enriched in polar residues; it reads KVQSQDPNPVNG. The helical transmembrane segment at 57–77 threads the bilayer; sequence TLVHLVKGNMGTGILGLPLAV. Residues 78–79 lie on the Extracellular side of the membrane; it reads KN. Residues 80-100 traverse the membrane as a helical segment; that stretch reads AGILMGPLSLLVMGLIACHCM. The Cytoplasmic segment spans residues 101 to 146; that stretch reads HILVRCAQRFCHRLNKPFMDYGDTVMHGLASSPNTWLQSHAHWGRH. Residues 147–167 traverse the membrane as a helical segment; it reads AVSFFLIVTQLGFCCVYIVFL. Residues 168–195 are Extracellular-facing; that stretch reads ADNLKQVVEAVNSTTISCHKNETVVLTP. The chain crosses the membrane as a helical span at residues 196–216; that stretch reads TIDSRLYMLAFLPVLGLLVFI. Residues 217-220 are Cytoplasmic-facing; the sequence is RNLR. Residues 221–241 form a helical membrane-spanning segment; it reads VLTIFSLLANVSMLVSLVIIG. At 242–262 the chain is on the extracellular side; it reads QYIIQGIPDPSQLPLVASWKT. Residues 263–283 traverse the membrane as a helical segment; that stretch reads YPLFFGTAIFSFESIGVVLPL. Residues 284–295 lie on the Cytoplasmic side of the membrane; the sequence is ENKMKDARRFPT. A helical transmembrane segment spans residues 296–316; the sequence is ILSLGMSIITTLYIAIGALGY. Over 317 to 343 the chain is Extracellular; sequence LRFGDDIKASITLNLPNCWLYQSVKLL. A helical transmembrane segment spans residues 344–364; it reads YVVGILCTHALQFYVPAEIII. Residues 365–377 lie on the Cytoplasmic side of the membrane; sequence PLAVSQVSKRWAL. The chain crosses the membrane as a helical span at residues 378–398; the sequence is PVDLSIRLALVCVTCMLAILI. Topologically, residues 399–402 are extracellular; sequence PRLD. The helical transmembrane segment at 403–423 threads the bilayer; sequence LVLSLVGSVSSSALALIIPPL. Residues 424–444 are Cytoplasmic-facing; it reads LEVTTYYGEGMSPLTITKDAL. Residues 445-465 form a helical membrane-spanning segment; that stretch reads ISILGFMGFVVGTYQALDELI. Residues 466 to 481 are Extracellular-facing; sequence RSGNSLPLSNSTMFIQ.

Belongs to the amino acid/polyamine transporter 2 family. In terms of tissue distribution, expressed in lung and spleen, and to a lower extent in brain, heart, kidney and skeletal muscle.

It localises to the cell membrane. The protein resides in the endoplasmic reticulum membrane. Its subcellular location is the recycling endosome membrane. It carries out the reaction glycine(in) + H(+)(in) = glycine(out) + H(+)(out). It catalyses the reaction L-alanine(in) + H(+)(in) = L-alanine(out) + H(+)(out). The enzyme catalyses D-alanine(in) + H(+)(in) = D-alanine(out) + H(+)(out). The catalysed reaction is L-proline(out) + H(+)(out) = L-proline(in) + H(+)(in). It carries out the reaction D-proline(out) + H(+)(out) = D-proline(in) + H(+)(in). It catalyses the reaction 4-hydroxy-L-proline(in) + H(+)(in) = 4-hydroxy-L-proline(out) + H(+)(out). The enzyme catalyses L-serine(in) + H(+)(in) = L-serine(out) + H(+)(out). The catalysed reaction is D-serine(out) + H(+)(out) = D-serine(in) + H(+)(in). It carries out the reaction beta-alanine(in) + H(+)(in) = beta-alanine(out) + H(+)(out). It catalyses the reaction 4-aminobutanoate(in) + H(+)(in) = 4-aminobutanoate(out) + H(+)(out). The enzyme catalyses sarcosine(in) + H(+)(in) = sarcosine(out) + H(+)(out). The catalysed reaction is N,N-dimethylglycine(in) + H(+)(in) = N,N-dimethylglycine(out) + H(+)(out). Inhibited by L- and D-pipecolic acid, nipecotic acid, isonipecotic acid, L- and D-cycloserine, and L-2-azetidine-carboxylate. In terms of biological role, electrogenic proton/amino acid symporter with a high selectivity for the small side chains amino acids glycine, alanine and proline, where both L- and D-enantiomers are transported. Extension of the backbone length, as in beta-alanine and 4-aminobutanoate or methylation of the amino group, as in sarcosine and N,N-dimethylglycine, are also tolerated but decrease transport efficiency. A free carboxyl group is preferred. This chain is Proton-coupled amino acid transporter 2, found in Rattus norvegicus (Rat).